We begin with the raw amino-acid sequence, 208 residues long: Large ribosomal subunit protein bL9 (208 aa).

Positions 161–208 (KKRKIEKEVEEGSGTSVDESLKLDSVSDSIDTSGVNSSDKEEENNIIE) are disordered. Residues 186–197 (VSDSIDTSGVNS) are compositionally biased toward polar residues.

The protein belongs to the bacterial ribosomal protein bL9 family.

Binds to the 23S rRNA. This chain is Large ribosomal subunit protein bL9, found in Ehrlichia canis (strain Jake).